The sequence spans 293 residues: Triacylglycerol lipase (293 aa).

In terms of domain architecture, AB hydrolase-1 spans 10–206 (PILLVHGLFG…YYSWSGIIKG (197 aa)). Leu-17 is a substrate binding site. The active-site Nucleophile is the Ser-83. Substrate is bound at residue Gln-84. Residue Asp-217 participates in Ca(2+) binding. Active-site charge relay system residues include Asp-238 and His-260. Ca(2+) contacts are provided by Asp-262, His-266, and Arg-269.

Belongs to the AB hydrolase superfamily. Pseudomonas lipase family. Ca(2+) serves as cofactor.

The protein resides in the secreted. It catalyses the reaction a triacylglycerol + H2O = a diacylglycerol + a fatty acid + H(+). In terms of biological role, catalyzes the hydrolysis of triacylglycerols, with the highest activity with tributyrin (C4), lower activity with tricaprylin (C8), and much lower activity with triacetin (C2), trilaurin (C12) and triolein (C18). This is Triacylglycerol lipase (lips) from Pseudomonas fragi.